Here is a 171-residue protein sequence, read N- to C-terminus: Protein TIFY 11d (171 aa).

A Tify domain is found at 65–100 (PSAGTAPLTIFYDGRMVVVDDVPAEKAAELMRLAGS). The short motif at 117–142 (PIARKASLQRFLQKRKHRITTTSEPY) is the Jas element. The Nuclear localization signal motif lies at 119–126 (ARKASLQR).

Belongs to the TIFY/JAZ family. As to quaternary structure, interacts with BHLH148 and COI1A. Interacts with COI1A, COI1B and COI2 in a coronatine-dependent manner. Coronatine is an analog of jasmonoyl isoleucine (JA-Ile). Ubiquitinated. Increase in jasmonoyl isoleucine (JA-Ile) levels mediates its degradation via COI1A-mediated proteasome pathway.

It is found in the nucleus. Functionally, repressor of jasmonate (JA) responses. May act on an initial response of JA-regulated gene expression toward drought tolerance as part of a BHLH148-TIFY11D/JAZ12-COI1A complex. The sequence is that of Protein TIFY 11d from Oryza sativa subsp. indica (Rice).